The primary structure comprises 461 residues: A-type ATP synthase subunit B (461 aa).

Belongs to the ATPase alpha/beta chains family. Has multiple subunits with at least A(3), B(3), C, D, E, F, H, I and proteolipid K(x).

Its subcellular location is the cell membrane. Component of the A-type ATP synthase that produces ATP from ADP in the presence of a proton gradient across the membrane. The B chain is a regulatory subunit. This Methanoculleus marisnigri (strain ATCC 35101 / DSM 1498 / JR1) protein is A-type ATP synthase subunit B.